Here is a 187-residue protein sequence, read N- to C-terminus: Protein P18, mitochondrial (187 aa).

The N-terminal 17 residues, 1-17 (MRRLSSQLMCTAAAVRF), are a transit peptide targeting the mitochondrion. The disordered stretch occupies residues 160-187 (NAAKAKADGKEHPSTLAQQQSLFDIKIQ).

The protein resides in the mitochondrion inner membrane. Its function is as follows. Putative RNA-binding protein. This is Protein P18, mitochondrial from Leishmania tarentolae (Sauroleishmania tarentolae).